A 313-amino-acid chain; its full sequence is NADH-ubiquinone oxidoreductase chain 1 (313 aa).

8 helical membrane-spanning segments follow: residues isoleucine 2 to leucine 22, valine 72 to proline 92, phenylalanine 102 to glycine 122, leucine 148 to phenylalanine 168, glutamate 173 to alanine 193, phenylalanine 222 to phenylalanine 244, phenylalanine 249 to phenylalanine 268, and leucine 293 to leucine 313.

The protein belongs to the complex I subunit 1 family.

The protein resides in the mitochondrion inner membrane. The enzyme catalyses a ubiquinone + NADH + 5 H(+)(in) = a ubiquinol + NAD(+) + 4 H(+)(out). In terms of biological role, core subunit of the mitochondrial membrane respiratory chain NADH dehydrogenase (Complex I) that is believed to belong to the minimal assembly required for catalysis. Complex I functions in the transfer of electrons from NADH to the respiratory chain. The immediate electron acceptor for the enzyme is believed to be ubiquinone. The sequence is that of NADH-ubiquinone oxidoreductase chain 1 (ND1) from Branchiostoma lanceolatum (Common lancelet).